The sequence spans 309 residues: 2-dehydro-3-deoxygluconokinase (309 aa).

Residues 34–38, Tyr89, 103–105, and Arg167 each bind substrate; these read GAEVN and YYR. Residues 165 to 167, Ser193, 219 to 225, 248 to 251, and Asn275 each bind ATP; these read NYR, KRGAKGA, and GAGD. Residue Asp251 coordinates substrate. The Proton acceptor role is filled by Asp251. Residue Asp287 coordinates substrate.

This sequence belongs to the carbohydrate kinase pfkB family. As to quaternary structure, homohexamer; trimer of dimers.

The enzyme catalyses 2-dehydro-3-deoxy-D-gluconate + ATP = 2-dehydro-3-deoxy-6-phospho-D-gluconate + ADP + H(+). It functions in the pathway carbohydrate acid metabolism; 2-dehydro-3-deoxy-D-gluconate degradation; D-glyceraldehyde 3-phosphate and pyruvate from 2-dehydro-3-deoxy-D-gluconate: step 1/2. Its function is as follows. Involved in the degradation of glucose via the semi-phosphorylative Entner-Doudoroff pathway. Catalyzes the phosphorylation of 2-keto-3-deoxygluconate (KDG) to produce 2-keto-3-deoxy-6-phosphogluconate (KDPG). In Thermus thermophilus (strain ATCC 27634 / DSM 579 / HB8), this protein is 2-dehydro-3-deoxygluconokinase (kdgK).